The chain runs to 98 residues: RING finger protein Z (98 aa).

The segment covering 1 to 10 (MGNTKTKDRQ) has biased composition (basic and acidic residues). The disordered stretch occupies residues 1–26 (MGNTKTKDRQYQSNSSQPTNTSAPVL). G2 is lipidated: N-myristoyl glycine; by host. Polar residues predominate over residues 11–23 (YQSNSSQPTNTSA). Residues 41-77 (CRCCWFADTNLVNCSNHYLCLKCLNTMLRRSNLCDIC) form an RING-type; atypical zinc finger. A PTAP/PSAP motif motif is present at residues 91–94 (PSAP).

The protein belongs to the arenaviridae Z protein family. Interacts with protein NP; this interaction probably directs the encapsidated genome to budding sites. Interacts (via RING domain) with polymerase L; this interaction inhibits viral transcription and replication, Z partially blocks the product exit tunnel for the releasing nascent RNA product. Interacts with the glycoprotein complex; this interaction plays a role in virion budding. Interacts with host eIF4E; this interaction results in eIF4E reduced affinity for its substrate, the 5'-m7 G cap structure. Interacts (via late-budding domain) with host TSG101; this interaction is essential for budding and release of viral particles. Interacts with host RPLP0; this interaction may serve to load ribosome-like particles inside the virion. Interacts with host PML; this interaction induces PML bodies redistribution in the cytoplasm upon viral infection. Post-translationally, myristoylation is required for the role of RING finger protein Z in assembly and budding.

It is found in the virion. The protein resides in the host cytoplasm. The protein localises to the host perinuclear region. Its subcellular location is the host cell membrane. In terms of biological role, plays a crucial role in virion assembly and budding. Expressed late in the virus life cycle, it acts as an inhibitor of viral transcription and RNA synthesis by interacting with the viral polymerase L. Presumably recruits the NP encapsidated genome to cellular membranes at budding sites via direct interaction with NP. Plays critical roles in the final steps of viral release by interacting with host TSG101, a member of the vacuolar protein-sorting pathway and using other cellular host proteins involved in vesicle formation pathway. The budding of the virus progeny occurs after association of protein Z with the viral glycoprotein complex SSP-GP1-GP2 at the cell periphery, step that requires myristoylation of protein Z. Also selectively represses protein production by associating with host eIF4E. In cell-based minigenome assay, has an inhibitory effect on the ribonucleoprotein machinery (vRNP), which is responsible for the replication and transcription of the viral genome. This is RING finger protein Z from Chapare mammarenavirus (isolate Human/Bolivia/810419/2003).